Consider the following 624-residue polypeptide: tRNA uridine 5-carboxymethylaminomethyl modification enzyme MnmG (624 aa).

Residues 13–18, Val125, and Ser180 contribute to the FAD site; that span reads GGGHAG. NAD(+) is bound at residue 273-287; that stretch reads GPRYCPSIEDKIVRF. Gln370 contributes to the FAD binding site.

It belongs to the MnmG family. Homodimer. Heterotetramer of two MnmE and two MnmG subunits. It depends on FAD as a cofactor.

The protein resides in the cytoplasm. Functionally, NAD-binding protein involved in the addition of a carboxymethylaminomethyl (cmnm) group at the wobble position (U34) of certain tRNAs, forming tRNA-cmnm(5)s(2)U34. This is tRNA uridine 5-carboxymethylaminomethyl modification enzyme MnmG from Legionella pneumophila subsp. pneumophila (strain Philadelphia 1 / ATCC 33152 / DSM 7513).